The primary structure comprises 669 residues: Bestrophin-3 (669 aa).

The Cytoplasmic segment spans residues 1–31; it reads MTVTYSSKVANATFFGFHRLLLKWRGSIYKL. Residue A10 participates in Ca(2+) binding. A helical membrane pass occupies residues 32-51; sequence LYREFIVFAVLYTAISLVYR. Over 52 to 60 the chain is Extracellular; sequence LLLTGAQKR. A helical transmembrane segment spans residues 61–82; sequence YFEKLSIYCDRYAEQIPVTFVL. Residues 83–237 lie on the Cytoplasmic side of the membrane; that stretch reads GFYVTLVVNR…DWVGIPLVYT (155 aa). A helical transmembrane segment spans residues 238–255; sequence QVVTLAVYTFFFACLIGR. Over 256 to 274 the chain is Extracellular; it reads QFLDPTKGYVGHDLDLYVP. A helical membrane pass occupies residues 275-288; sequence IFTLLQFFFYAGWL. Residues 289 to 669 are Cytoplasmic-facing; sequence KVAEQLINPF…GTPQRPRTWF (381 aa). Ca(2+)-binding residues include Q293, N296, D301, and D304. 4 disordered regions span residues 399–496, 533–560, 591–627, and 646–669; these read LSTH…TKMP, QPSGTEQQVEPSGTPPGDPNPQTTSAST, TSLGNLGPDPVSPRDALLLPDTETPSETNGIHPGAGS, and ILEFNNEHTGESPKGTPQRPRTWF. A compositionally biased stretch (basic residues) spans 440–451; the sequence is NPHRGSPTRKQS. Over residues 475-492 the composition is skewed to low complexity; it reads RTSTLQSLSPQSSVRSSP. The segment covering 533-543 has biased composition (polar residues); the sequence is QPSGTEQQVEP. Residues 646–656 are compositionally biased toward basic and acidic residues; it reads ILEFNNEHTGE.

It belongs to the anion channel-forming bestrophin (TC 1.A.46) family. Calcium-sensitive chloride channel subfamily. Expressed in heart. In terms of tissue distribution, expressed in brain, retina/retinal pigment epithelium (RPE) and skeletal muscle. Expressed in acinar cells of parotid glands. Expressed in lung, kidney and testis.

The protein localises to the cell membrane. It catalyses the reaction chloride(in) = chloride(out). Its function is as follows. Ligand-gated anion channel that allows the movement of chloride monoatomic anions across cell membranes when activated by calcium (Ca2+). Does not function as calcium-gated chloride channel. In Mus musculus (Mouse), this protein is Bestrophin-3 (Best3).